The primary structure comprises 202 residues: Small ribosomal subunit protein uS4 (202 aa).

The S4 RNA-binding domain occupies 93–155; it reads RRLDNVVRRV…ENLKNLYRGV (63 aa).

The protein belongs to the universal ribosomal protein uS4 family. In terms of assembly, part of the 30S ribosomal subunit. Contacts protein S5. The interaction surface between S4 and S5 is involved in control of translational fidelity.

In terms of biological role, one of the primary rRNA binding proteins, it binds directly to 16S rRNA where it nucleates assembly of the body of the 30S subunit. Its function is as follows. With S5 and S12 plays an important role in translational accuracy. The chain is Small ribosomal subunit protein uS4 from Rhodopirellula baltica (strain DSM 10527 / NCIMB 13988 / SH1).